We begin with the raw amino-acid sequence, 777 residues long: B3 domain-containing protein REM-like 1 (777 aa).

The TF-B3 1 DNA-binding region spans 97-193; the sequence is FVTFTLAPVD…TPVLSLCFEE (97 aa). Disordered stretches follow at residues 200-248 and 344-391; these read VGEE…TSPS and KSSS…ESSS. Residues 218-243 are compositionally biased toward basic and acidic residues; sequence KIVKDDNNKDESSTWKREGNHLRCKD. Positions 252–347 form a DNA-binding region, TF-B3 2; the sequence is TLTVTITPDS…TPVLSIKSSS (96 aa). Polar residues predominate over residues 344 to 368; it reads KSSSGKGQSEFSKESLSIKPSSGNM. Over residues 370-388 the composition is skewed to basic and acidic residues; sequence KKVENNREASRKYPPRSRE. DNA-binding regions (TF-B3) lie at residues 582-676 and 683-777; these read FLTL…RDSS and FLTL…FYTK.

The protein localises to the nucleus. The polypeptide is B3 domain-containing protein REM-like 1 (Arabidopsis thaliana (Mouse-ear cress)).